We begin with the raw amino-acid sequence, 360 residues long: RNA-binding protein 1 (360 aa).

The region spanning 6 to 82 (YKLFVGGIAK…KPVDVRKAIR (77 aa)) is the RRM 1 domain. Residues 93–113 (MQFLERKVQQMNGGLREMSSN) adopt a coiled-coil conformation. In terms of domain architecture, RRM 2 spans 120 to 197 (KKIFVGGLSS…KRVEVKRAIP (78 aa)).

As to expression, highly expressed in inflorescences and roots. Detected in leaves and seedlings, but not in stems. Expressed in vegetative shoot apex and root meristem, but not in root cap. Detected in flower buds, junction of pedicels, joints of immature siliques and pistil.

Functionally, RNA binding protein. Can also bind in vitro to single-stranded DNA. This Arabidopsis thaliana (Mouse-ear cress) protein is RNA-binding protein 1 (RBP1).